The following is a 217-amino-acid chain: Flagellin B1 (217 aa).

A propeptide spanning residues 1–12 (MKVFEFLKGKRG) is cleaved from the precursor.

The protein belongs to the archaeal flagellin family.

Its subcellular location is the archaeal flagellum. Flagellin is the subunit protein which polymerizes to form the filaments of archaeal flagella. In Methanocaldococcus jannaschii (strain ATCC 43067 / DSM 2661 / JAL-1 / JCM 10045 / NBRC 100440) (Methanococcus jannaschii), this protein is Flagellin B1 (flaB1).